Reading from the N-terminus, the 606-residue chain is Ectonucleoside triphosphate diphosphohydrolase 7 (606 aa).

The Cytoplasmic segment spans residues 1–28; the sequence is MARISFSYLCPASWYFTVPTVSPFLRQR. Residues 29 to 49 form a helical membrane-spanning segment; the sequence is VAFLGLFFIPCVLLLLLIMDL. At 50-548 the chain is on the vesicular side; sequence RHWATSLPRD…PAHGSWLRLS (499 aa). Residue E217 is the Proton acceptor of the active site. N-linked (GlcNAc...) asparagine glycosylation occurs at N330. A disulfide bond links C448 and C477. The helical transmembrane segment at 549 to 569 threads the bilayer; the sequence is FVYNHYLFFACTLVVLLAIVL. Residues 570 to 606 are Cytoplasmic-facing; sequence YLLRIHRIHRRQTRASAPLDLLWIEQVVPMIGVQVGP.

Belongs to the GDA1/CD39 NTPase family. It depends on Ca(2+) as a cofactor. Mg(2+) serves as cofactor. In terms of tissue distribution, widely expressed. Expressed at high level in brain, kidney, liver, testis and small intestin. Weakly expressed in lung, thymus and heart.

It is found in the cytoplasmic vesicle membrane. It carries out the reaction a ribonucleoside 5'-triphosphate + H2O = a ribonucleoside 5'-diphosphate + phosphate + H(+). It catalyses the reaction UTP + H2O = UDP + phosphate + H(+). The catalysed reaction is GTP + H2O = GDP + phosphate + H(+). The enzyme catalyses CTP + H2O = CDP + phosphate + H(+). It carries out the reaction ATP + H2O = ADP + phosphate + H(+). Functionally, catalyzes the hydrolysis of nucleoside triphosphates and diphosphates in a calcium- or magnesium-dependent manner. Preferentially hydrolyzes nucleoside 5'-triphosphates, with substrate preference for UTP &gt; GTP &gt; CTP. Hydrolyzes nucleoside diphosphates only to a minor extent. In contrast to its human ortholog is able to hydrolyze ATP. In the epithelial cells of small intestine controls luminal ATP levels, therefore regulating Th17-cell development. This chain is Ectonucleoside triphosphate diphosphohydrolase 7 (Entpd7), found in Mus musculus (Mouse).